The chain runs to 210 residues: Tetraspanin-31 (210 aa).

At 1–12 the chain is on the cytoplasmic side; sequence MVCGGFACSRNA. Residues 13–33 form a helical membrane-spanning segment; that stretch reads LCALNVVYMLVGFLLIGVAAW. At 34-44 the chain is on the extracellular side; the sequence is GKGLGVVSSIH. A helical membrane pass occupies residues 45-65; the sequence is IIGGVIAVGVFLLLIAVAGLV. Over 66 to 72 the chain is Cytoplasmic; sequence GAANHHQ. The chain crosses the membrane as a helical span at residues 73–93; the sequence is VLLFFYMIILGLVFIFQFGIS. The Extracellular segment spans residues 94–173; the sequence is CSCLAINRNT…FLKHSDKALK (80 aa). 3 N-linked (GlcNAc...) asparagine glycosylation sites follow: Asn109, Asn117, and Asn134. Residues 174–194 traverse the membrane as a helical segment; the sequence is ILGGVGLFFSFTEILGVWLAM. Residues 195-210 are Cytoplasmic-facing; it reads RFRNQKDPRANPSAFL.

Belongs to the tetraspanin (TM4SF) family.

The protein resides in the membrane. In Mus musculus (Mouse), this protein is Tetraspanin-31 (Tspan31).